The following is a 483-amino-acid chain: ATP synthase subunit beta (483 aa).

169-176 (GGAGVGKT) contacts ATP.

The protein belongs to the ATPase alpha/beta chains family. In terms of assembly, F-type ATPases have 2 components, CF(1) - the catalytic core - and CF(0) - the membrane proton channel. CF(1) has five subunits: alpha(3), beta(3), gamma(1), delta(1), epsilon(1). CF(0) has three main subunits: a(1), b(2) and c(9-12). The alpha and beta chains form an alternating ring which encloses part of the gamma chain. CF(1) is attached to CF(0) by a central stalk formed by the gamma and epsilon chains, while a peripheral stalk is formed by the delta and b chains.

It is found in the cell membrane. The enzyme catalyses ATP + H2O + 4 H(+)(in) = ADP + phosphate + 5 H(+)(out). Produces ATP from ADP in the presence of a proton gradient across the membrane. The catalytic sites are hosted primarily by the beta subunits. In Rhodococcus opacus (strain B4), this protein is ATP synthase subunit beta.